Here is a 513-residue protein sequence, read N- to C-terminus: Cytochrome P450 monooxygenase CYP3 (513 aa).

Positions 1–21 (MLPRSLGHSTSELSPPFDGPN) are disordered. Cysteine 451 is a heme binding site.

This sequence belongs to the cytochrome P450 family. It depends on heme as a cofactor.

Its pathway is secondary metabolite biosynthesis. Its function is as follows. Cytochrome P450 monooxygenase; part of the gene cluster that mediates the biosynthesis of a tyrosine-derived cytochalasan acting as a fungal signal recognized by resistant rice plants and leads to avirulence in Pi33 resistant rice cultivars. The first step in the pathway is catalyzed by the hybrid PKS-NRPS ACE1, assisted by the enoyl reductase RAP1, that are responsible for fusion of the tyrosine precursor and the polyketide backbone. The polyketide synthase module (PKS) of ACE1 is responsible for the synthesis of the polyketide backbone and the downstream nonribosomal peptide synthetase (NRPS) amidates the carboxyl end of the polyketide with the tyrosine precursor. Because ACE1 lacks a designated enoylreductase (ER) domain, the required activity is provided the enoyl reductase RAP1. Reduction by the hydrolyase ORFZ, followed by dehydration and intra-molecular Diels-Alder cyclization by the Diels-Alderase ORF3 then yield the required isoindolone-fused macrocycle. A number of oxidative steps catalyzed by the tailoring enzymes identified within the cluster, including cytochrome P450 monooxygenases CYP1 to CYP4, the FAD-linked oxidoreductase OXR2 and the short-chain dehydrogenase/reductase OXR1, are further required to afford the final cytochalasans that confer avirulence and which have still to be identified. The monooxygenase CYP1 has been shown to be a site-selective C-18 hydroxylase whereas the function of CYP3 is the site-selective epoxidation of the C-6/C-7 olefin that is present in some intermediate compounds. Finally, SYN2 and RAP2 are not required for avirulence in Pi33 resistant rice cultivars. The protein is Cytochrome P450 monooxygenase CYP3 of Pyricularia oryzae (strain 70-15 / ATCC MYA-4617 / FGSC 8958) (Rice blast fungus).